The chain runs to 487 residues: uncharacterized protein (487 aa).

The N-terminal stretch at 1–31 is a signal peptide; that stretch reads MRFHRQGISAIIGVLLIVLLGFCWKLSGSYG. N-linked (GlcNAc...) asparagine glycans are attached at residues asparagine 40, asparagine 68, asparagine 150, asparagine 220, asparagine 304, asparagine 367, asparagine 442, and asparagine 448. Residues 141 to 176 form a disordered region; that stretch reads LERRHGRFGNGTNGDHPKGPPPPPPPPDEKGRGSQK.

In terms of processing, N-glycosylated.

This is an uncharacterized protein from Saccharomyces cerevisiae (strain ATCC 204508 / S288c) (Baker's yeast).